Reading from the N-terminus, the 253-residue chain is DNA repair protein RecO (253 aa).

It belongs to the RecO family.

In terms of biological role, involved in DNA repair and RecF pathway recombination. This Staphylococcus epidermidis (strain ATCC 35984 / DSM 28319 / BCRC 17069 / CCUG 31568 / BM 3577 / RP62A) protein is DNA repair protein RecO.